The following is a 366-amino-acid chain: Histidinol-phosphate aminotransferase 2 (366 aa).

The tract at residues 1 to 21 is disordered; it reads MQVKDQLSLLQPYKPGKSPEQ. An N6-(pyridoxal phosphate)lysine modification is found at lysine 222.

This sequence belongs to the class-II pyridoxal-phosphate-dependent aminotransferase family. Histidinol-phosphate aminotransferase subfamily. As to quaternary structure, homodimer. Pyridoxal 5'-phosphate is required as a cofactor.

The enzyme catalyses L-histidinol phosphate + 2-oxoglutarate = 3-(imidazol-4-yl)-2-oxopropyl phosphate + L-glutamate. It functions in the pathway amino-acid biosynthesis; L-histidine biosynthesis; L-histidine from 5-phospho-alpha-D-ribose 1-diphosphate: step 7/9. The chain is Histidinol-phosphate aminotransferase 2 from Bacillus cereus (strain ZK / E33L).